The following is a 394-amino-acid chain: Elongation factor Tu (394 aa).

Residues K10–E204 form the tr-type G domain. A G1 region spans residues G19–T26. G19 to T26 contacts GTP. T26 serves as a coordination point for Mg(2+). The segment at G60 to N64 is G2. A G3 region spans residues D81 to G84. GTP contacts are provided by residues D81–H85 and N136–D139. The G4 stretch occupies residues N136–D139. The tract at residues S174–L176 is G5.

This sequence belongs to the TRAFAC class translation factor GTPase superfamily. Classic translation factor GTPase family. EF-Tu/EF-1A subfamily. Monomer.

The protein localises to the cytoplasm. It catalyses the reaction GTP + H2O = GDP + phosphate + H(+). Its function is as follows. GTP hydrolase that promotes the GTP-dependent binding of aminoacyl-tRNA to the A-site of ribosomes during protein biosynthesis. This chain is Elongation factor Tu, found in Aeromonas hydrophila subsp. hydrophila (strain ATCC 7966 / DSM 30187 / BCRC 13018 / CCUG 14551 / JCM 1027 / KCTC 2358 / NCIMB 9240 / NCTC 8049).